Consider the following 427-residue polypeptide: Thyroid hormone receptor alpha-A (427 aa).

A compositionally biased stretch (basic and acidic residues) spans 1-11 (MENTEQEHNLP). Positions 1 to 40 (MENTEQEHNLPEGDETQWPNGVKRKRKNSQCSMNSTSDKS) are disordered. Residues 1–56 (MENTEQEHNLPEGDETQWPNGVKRKRKNSQCSMNSTSDKSISVPGYVPSYLEKDEP) form a modulating region. The span at 29 to 40 (SQCSMNSTSDKS) shows a compositional bias: polar residues. 2 NR C4-type zinc fingers span residues 57 to 77 (CVVC…CEGC) and 95 to 119 (CKYD…FRKC). Positions 57–131 (CVVCGDKATG…VGMAMDLVLD (75 aa)) form a DNA-binding region, nuclear receptor. Positions 167–410 (SEWELIRMVT…PPLFLEVFED (244 aa)) constitute an NR LBD domain.

This sequence belongs to the nuclear hormone receptor family. NR1 subfamily. As to quaternary structure, interacts with ncoa2. In terms of tissue distribution, after the mid-blastula transition (MBT), expressed throughout the deep cells, which give rise to the embryo proper. In adults, isoform 2 shows highest expression in the eye and liver. Expressed in adult gonads.

Its subcellular location is the nucleus. High affinity receptor for triiodothyronine. In the absence of thyroid hormone during late blastula stage development, acts as a transcriptional repressor. Whereas in the presence of thyroid hormone, can act as an activator of transcription. In addition, represses retinoic acid (RA)-signaling during blastula and gastrula stages of development. The protein is Thyroid hormone receptor alpha-A (thraa) of Danio rerio (Zebrafish).